The chain runs to 71 residues: DNA-directed RNA polymerase subunit epsilon (71 aa).

Belongs to the RNA polymerase subunit epsilon family. RNAP is composed of a core of 2 alpha, a beta and a beta' subunit. The core is associated with a delta subunit, and at least one of epsilon or omega. When a sigma factor is associated with the core the holoenzyme is formed, which can initiate transcription.

The catalysed reaction is RNA(n) + a ribonucleoside 5'-triphosphate = RNA(n+1) + diphosphate. In terms of biological role, a non-essential component of RNA polymerase (RNAP). This Geobacillus thermodenitrificans (strain NG80-2) protein is DNA-directed RNA polymerase subunit epsilon.